We begin with the raw amino-acid sequence, 779 residues long: Endonuclease MutS2 (779 aa).

328–335 is a binding site for ATP; the sequence is GPNTGGKT. The region spanning 704–779 is the Smr domain; it reads LDLRGKRYEE…GSGATIVTLG (76 aa).

This sequence belongs to the DNA mismatch repair MutS family. MutS2 subfamily. As to quaternary structure, homodimer. Binds to stalled ribosomes, contacting rRNA.

Its function is as follows. Endonuclease that is involved in the suppression of homologous recombination and thus may have a key role in the control of bacterial genetic diversity. In terms of biological role, acts as a ribosome collision sensor, splitting the ribosome into its 2 subunits. Detects stalled/collided 70S ribosomes which it binds and splits by an ATP-hydrolysis driven conformational change. Acts upstream of the ribosome quality control system (RQC), a ribosome-associated complex that mediates the extraction of incompletely synthesized nascent chains from stalled ribosomes and their subsequent degradation. Probably generates substrates for RQC. The polypeptide is Endonuclease MutS2 (Streptococcus pyogenes serotype M49 (strain NZ131)).